The primary structure comprises 268 residues: Tryptophan synthase alpha chain (268 aa).

Catalysis depends on proton acceptor residues Glu49 and Asp60.

Belongs to the TrpA family. As to quaternary structure, tetramer of two alpha and two beta chains.

It carries out the reaction (1S,2R)-1-C-(indol-3-yl)glycerol 3-phosphate + L-serine = D-glyceraldehyde 3-phosphate + L-tryptophan + H2O. Its pathway is amino-acid biosynthesis; L-tryptophan biosynthesis; L-tryptophan from chorismate: step 5/5. In terms of biological role, the alpha subunit is responsible for the aldol cleavage of indoleglycerol phosphate to indole and glyceraldehyde 3-phosphate. This chain is Tryptophan synthase alpha chain, found in Xanthomonas oryzae pv. oryzae (strain MAFF 311018).